The chain runs to 1687 residues: Brefeldin A-inhibited guanine nucleotide-exchange protein 1 (1687 aa).

The tract at residues 494–529 (SLENEAPANNHSNSNEEDGTTIDHDFHPDLNPESSD) is disordered. A compositionally biased stretch (basic and acidic residues) spans 514 to 523 (TIDHDFHPDL). The SEC7 domain maps to 532-719 (TLEQRRAYKI…GALYDQVVIN (188 aa)). E634 is a catalytic residue. The interval 1229 to 1248 (KGRSSSPSTPVTDDHSPSTQ) is disordered. Residues 1232-1248 (SSSPSTPVTDDHSPSTQ) show a composition bias toward polar residues.

Homodimer.

The protein resides in the cytoplasm. It localises to the cytosol. The protein localises to the membrane. With respect to regulation, inhibited by brefeldin A. Functionally, activates the ARF proteins by exchanging bound GDP for free GTP. Plays a role in vesicular protein sorting. This is Brefeldin A-inhibited guanine nucleotide-exchange protein 1 (BIG1) from Arabidopsis thaliana (Mouse-ear cress).